The primary structure comprises 179 residues: MQRKPSQKSATDKLFNHRINEKITGVSRVRLVSDDGVAIVSFEEALRKAKEENLDLVEVSADQELHVCKIIDYGKYKFELLKKNKEAKKKQHVINVKEIKIRPRIESHDYEIKKKHAQEFLGKGDKVKVSLRFRGREMMHSDLGMKVVYRMIEDLKEYGLAERDPIQDGKQIVVIINPK.

This sequence belongs to the IF-3 family. Monomer.

It is found in the cytoplasm. Its function is as follows. IF-3 binds to the 30S ribosomal subunit and shifts the equilibrium between 70S ribosomes and their 50S and 30S subunits in favor of the free subunits, thus enhancing the availability of 30S subunits on which protein synthesis initiation begins. The sequence is that of Translation initiation factor IF-3 from Leptospira borgpetersenii serovar Hardjo-bovis (strain L550).